An 83-amino-acid polypeptide reads, in one-letter code: U-actitoxin-Aeq6a (83 aa).

The N-terminal stretch at 1–20 (MIYKAVFVCLVLVLLGDVFC) is a signal peptide. The propeptide occupies 21–36 (SPRNSGGGTLNDNPFE). Pro-82 is subject to Proline amide.

Post-translationally, contains 3 disulfide bonds. Expressed by acrorhagi.

It is found in the secreted. The protein localises to the nematocyst. Its function is as follows. Toxin. The chain is U-actitoxin-Aeq6a from Actinia equina (Beadlet anemone).